We begin with the raw amino-acid sequence, 614 residues long: Glutamyl-tRNA(Gln) amidotransferase subunit E (614 aa).

It belongs to the GatB/GatE family. GatE subfamily. Heterodimer of GatD and GatE.

It catalyses the reaction L-glutamyl-tRNA(Gln) + L-glutamine + ATP + H2O = L-glutaminyl-tRNA(Gln) + L-glutamate + ADP + phosphate + H(+). In terms of biological role, allows the formation of correctly charged Gln-tRNA(Gln) through the transamidation of misacylated Glu-tRNA(Gln) in organisms which lack glutaminyl-tRNA synthetase. The reaction takes place in the presence of glutamine and ATP through an activated gamma-phospho-Glu-tRNA(Gln). The GatDE system is specific for glutamate and does not act on aspartate. This Methanospirillum hungatei JF-1 (strain ATCC 27890 / DSM 864 / NBRC 100397 / JF-1) protein is Glutamyl-tRNA(Gln) amidotransferase subunit E.